The sequence spans 1501 residues: Protein SNQ2 (1501 aa).

Over residues 1 to 17 (MSNIKSTQDSSHNAVAR) the composition is skewed to polar residues. The segment at 1–56 (MSNIKSTQDSSHNAVARSSSASFAASEESFTGITHDKDEQSDTPADKLTKMLTGPA) is disordered. N-acetylserine is present on serine 2. Low complexity predominate over residues 18-30 (SSSASFAASEESF). 2 positions are modified to phosphoserine: serine 26 and serine 29. Residues 34 to 49 (THDKDEQSDTPADKLT) are compositionally biased toward basic and acidic residues. A phosphoserine mark is found at serine 64, serine 80, and serine 86. One can recognise an ABC transporter 1 domain in the interval 161-410 (FKGIKAKRHQ…FAKMGYLCPP (250 aa)). N-linked (GlcNAc...) asparagine glycosylation is found at asparagine 273, asparagine 334, and asparagine 518. 5 helical membrane-spanning segments follow: residues 521-541 (YTVI…SLFY), 554-574 (GGVL…NISF), 600-620 (LASF…LFFL), 628-648 (GSFF…NGLF), and 664-680 (ISGI…TYMI). N-linked (GlcNAc...) asparagine glycosylation occurs at asparagine 730. A helical transmembrane segment spans residues 771–789 (FGILWCFLLGYVVLKVIFT). The 243-residue stretch at 853–1095 (FIWKDVCFTI…ILNYFERNGA (243 aa)) folds into the ABC transporter 2 domain. An N-linked (GlcNAc...) asparagine glycan is attached at asparagine 874. 889–896 (GESGAGKT) is a binding site for ATP. Threonine 1153 is subject to Phosphothreonine. Transmembrane regions (helical) follow at residues 1190–1212 (IMSK…FNVG), 1216–1236 (VGLQ…APAM), 1277–1296 (HLFF…RIFF), and 1333–1352 (ANVI…GVTQ). Asparagine 1401 carries N-linked (GlcNAc...) asparagine glycosylation. Residues 1455–1475 (FGIFWIYIFFNIIAMVCVYYL) traverse the membrane as a helical segment.

It belongs to the ABC transporter superfamily. ABCG family. PDR (TC 3.A.1.205) subfamily.

It is found in the membrane. Could be an ATP-dependent permease. Confers hyper-resistance to the mutagens 4-nitroquinoline-N-oxide (4-NQO) and triaziquone, as well as to the chemicals sulphomethuron methyl phenanthroline when present in multiple copies. Exhibits nucleoside triphosphatase activity. This Saccharomyces cerevisiae (strain ATCC 204508 / S288c) (Baker's yeast) protein is Protein SNQ2 (SNQ2).